The chain runs to 365 residues: Peptide chain release factor 2 (365 aa).

Gln-252 is subject to N5-methylglutamine.

The protein belongs to the prokaryotic/mitochondrial release factor family. Methylated by PrmC. Methylation increases the termination efficiency of RF2.

It localises to the cytoplasm. In terms of biological role, peptide chain release factor 2 directs the termination of translation in response to the peptide chain termination codons UGA and UAA. This Haemophilus ducreyi (strain 35000HP / ATCC 700724) protein is Peptide chain release factor 2.